We begin with the raw amino-acid sequence, 807 residues long: Mechanosensitive cation channel TMEM63A (807 aa).

Residues 1–51 (MTDSPFLELWQSRAVSVREQLGLGDRPNDSYCYNSAKNSTVLQGVTFGGIP) lie on the Extracellular side of the membrane. N-linked (GlcNAc...) asparagine glycosylation occurs at Asn-38. The helical transmembrane segment at 52–74 (TVLLIDVSCFLFLILVFSIIRRR) threads the bilayer. The Cytoplasmic portion of the chain corresponds to 75–134 (FWDYGRIALVSEADSEPRFQRLSSTSSSGQQDFENELGCCPWLTAIFRLHDDQILEWCGE). Residues 135 to 167 (DAIHYLSFQRHIIFLLVVVSFLSLCVILPVNLS) traverse the membrane as a helical segment. At 168–191 (GDLLDKDPYSFGRTTIANLQTDND) the chain is on the extracellular side. The helical transmembrane segment at 192–217 (LLWLHTIFAVIYLFLTVGFMRHHTQS) threads the bilayer. Over 218–416 (IKYKEENLVR…CWKNLSIQGL (199 aa)) the chain is Cytoplasmic. The intracellular linker IL2; confers mechanosensitivity stretch occupies residues 219–414 (KYKEENLVRR…DICWKNLSIQ (196 aa)). A helical membrane pass occupies residues 417–444 (RWWLQWLGINFTLFLGLFFLTTPSIILS). Topologically, residues 445–462 (TMDKFNVTKPIHALNNPI) are extracellular. N-linked (GlcNAc...) asparagine glycosylation occurs at Asn-450. The helical transmembrane segment at 463-490 (ISQFFPTLLLWSFSALLPSIVYYSTLLE) threads the bilayer. Residues 491 to 495 (SHWTK) are Cytoplasmic-facing. The helical transmembrane segment at 496-532 (SGENQIMMTKVYIFLIFMVLILPSLGLTSLDFFFRWL) threads the bilayer. The Extracellular portion of the chain corresponds to 533–554 (FDKTSSEASIRLECVFLPDQGA). A helical membrane pass occupies residues 555 to 586 (FFVNYVIASAFIGNGMELLRLPGLILYTFRMI). A gating helix region spans residues 555–586 (FFVNYVIASAFIGNGMELLRLPGLILYTFRMI). At 587 to 606 (MAKTAADRRNVKQNQAFQYE) the chain is on the cytoplasmic side. Residues 607–624 (FGAMYAWMLCVFTVIMAY) traverse the membrane as a helical segment. Topologically, residues 625–628 (SITC) are extracellular. The helical transmembrane segment at 629–651 (PIIAPFGLIYILLKHMVDRHNLY) threads the bilayer. The Cytoplasmic portion of the chain corresponds to 652–661 (FIYLPAKLEK). The chain crosses the membrane as a helical span at residues 662–689 (GIHFAAVNQALAAPILCLFWLYFFSFLR). Topologically, residues 690-694 (LGMKA) are extracellular. The chain crosses the membrane as a helical span at residues 695–709 (PATLFTFLVVLLTIL). The Cytoplasmic portion of the chain corresponds to 710 to 807 (VCLAHTCFGY…GSVAAAPQEA (98 aa)). A Phosphoserine modification is found at Ser-739.

Belongs to the CSC1 (TC 1.A.17) family. Monomer. N-Glycosylated.

It localises to the lysosome membrane. Its subcellular location is the early endosome membrane. The protein resides in the cell membrane. It carries out the reaction Ca(2+)(in) = Ca(2+)(out). Its function is as follows. Mechanosensitive cation channel with low conductance and high activation threshold. In contrast to TMEM63B, does not show phospholipid scramblase activity. Acts as a regulator of lysosomal morphology by mediating lysosomal mechanosensitivity. Important for the baby's first breath and respiration throughout life. Upon lung inflation conducts cation currents in alveolar type 1 and 2 cells triggering lamellar body exocytosis and surfactant secretion into airspace. Also acts as an osmosensitive cation channel preferentially activated by hypotonic stress. This Pongo abelii (Sumatran orangutan) protein is Mechanosensitive cation channel TMEM63A (TMEM63A).